A 290-amino-acid polypeptide reads, in one-letter code: Release factor glutamine methyltransferase (290 aa).

S-adenosyl-L-methionine contacts are provided by D140 and N181. 181 to 184 provides a ligand contact to substrate; the sequence is NPPY.

It belongs to the protein N5-glutamine methyltransferase family. PrmC subfamily.

It carries out the reaction L-glutaminyl-[peptide chain release factor] + S-adenosyl-L-methionine = N(5)-methyl-L-glutaminyl-[peptide chain release factor] + S-adenosyl-L-homocysteine + H(+). Its function is as follows. Methylates the class 1 translation termination release factors RF1/PrfA and RF2/PrfB on the glutamine residue of the universally conserved GGQ motif. The protein is Release factor glutamine methyltransferase of Chlamydia trachomatis serovar D (strain ATCC VR-885 / DSM 19411 / UW-3/Cx).